Consider the following 241-residue polypeptide: Transcriptional regulatory protein SrrA (241 aa).

In terms of domain architecture, Response regulatory spans 4-117 (EILIVDDEDR…EVVLRVKALL (114 aa)). 4-aspartylphosphate is present on Asp53. Residues 133–233 (RDVIEFKHLE…VWGVGYKFEV (101 aa)) constitute a DNA-binding region (ompR/PhoB-type).

Phosphorylated by SrrB.

The protein resides in the cytoplasm. In terms of biological role, member of the two-component regulatory system SrrA/SrrB, which is involved in the global regulation of staphylococcal virulence factors in response to environmental oxygen levels as well as biofilm formation. Also plays an essential role in host-derived nitric oxide resistance by regulating hmp/flavohemoglobin, an enzyme that detoxifies nitric oxide by converting it to nitrate. Functions as a transcription regulator by direct binding to promoter regions of target genes. The polypeptide is Transcriptional regulatory protein SrrA (srrA) (Staphylococcus aureus (strain NCTC 8325 / PS 47)).